The sequence spans 580 residues: Alpha-thujene synthase TPS3, chloroplastic (580 aa).

The N-terminal 26 residues, 1-26 (MALQLLTPSFSFQHSPSPHRLTTLRY), are a transit peptide targeting the chloroplast. (2E)-geranyl diphosphate is bound by residues R296, D333, D337, R473, and D476. The Mg(2+) site is built by D333 and D337. The short motif at 333 to 337 (DDVYD) is the DDXXD motif element. Mg(2+) is bound by residues D476, T480, and E484.

This sequence belongs to the terpene synthase family. Tpsb subfamily. In terms of assembly, monomer. The cofactor is Mg(2+). Requires Mn(2+) as cofactor. As to expression, mostly expressed in developing and mature fruits, and, to a lower extent, in male leaves. Barely detectable in female leaves and shoots.

The protein localises to the plastid. It is found in the chloroplast. It catalyses the reaction (2E)-geranyl diphosphate = alpha-thujene + diphosphate. The enzyme catalyses (2E)-geranyl diphosphate = (1R,5R)-sabinene + diphosphate. The protein operates within secondary metabolite biosynthesis; terpenoid biosynthesis. Monoterpene synthase (TPS) involved in the biosynthesis of monoterpene natural products used by traditional Chinese medicine to treat headache, inflammation and intoxication. Catalyzes the conversion of (2E)-geranyl diphosphate (GPP) into alpha-thujene and (1R,5R)-sabinene. The polypeptide is Alpha-thujene synthase TPS3, chloroplastic (Litsea cubeba (Aromatic litsea)).